Consider the following 205-residue polypeptide: Small ribosomal subunit protein uS4 (205 aa).

The segment at 19 to 45 is disordered; the sequence is IWGRPKSPVNRREYGPGQHGQRRKGKL. Residues 94-157 form the S4 RNA-binding domain; sequence SRLDAVVYRA…KQLAIVLEAV (64 aa).

Belongs to the universal ribosomal protein uS4 family. As to quaternary structure, part of the 30S ribosomal subunit. Contacts protein S5. The interaction surface between S4 and S5 is involved in control of translational fidelity.

One of the primary rRNA binding proteins, it binds directly to 16S rRNA where it nucleates assembly of the body of the 30S subunit. Its function is as follows. With S5 and S12 plays an important role in translational accuracy. The chain is Small ribosomal subunit protein uS4 from Brucella melitensis biotype 2 (strain ATCC 23457).